Here is a 96-residue protein sequence, read N- to C-terminus: Protein C4 (96 aa).

Gly2 carries the N-myristoyl glycine; by host lipid modification. The tract at residues 66–96 (STDDLQGEDSRQPMTLTPRQLTQEVSRRLLM) is disordered. Residues 77–89 (QPMTLTPRQLTQE) are compositionally biased toward polar residues.

Belongs to the geminiviridae protein AC4/C4 family.

The protein localises to the host cell membrane. Its function is as follows. Pathogenicity determinant. May act as a suppressor of RNA-mediated gene silencing, also known as post-transcriptional gene silencing (PTGS), a mechanism of plant viral defense that limits the accumulation of viral RNAs. In Cynanchum acutum (Tomato), this protein is Protein C4.